Here is a 219-residue protein sequence, read N- to C-terminus: Small ribosomal subunit protein uS3c (219 aa).

The KH type-2 domain occupies valine 47–glutamate 119.

Belongs to the universal ribosomal protein uS3 family. As to quaternary structure, part of the 30S ribosomal subunit.

The protein localises to the plastid. It is found in the chloroplast. In Staurastrum punctulatum (Green alga), this protein is Small ribosomal subunit protein uS3c (rps3).